A 421-amino-acid chain; its full sequence is MMEVLVLGSGVVGLTSAWYLAQAGHDVTVVDRQPRGAEETSFANAGQISYGYSSPWAAPGIPQKALKWMLEKHAPLKIQPSLDPALLSWMGKMLLNCQLSRYQVNKSRMLAIANYSRECLKALNQTYSLDYQGRQRGTLQVFRDEKQLTAIEKDMQLLAQSGVRFELLNVAQCLTHEPGLAPVQEKLVGGLWLPDDETGDCYLFCQQLTELAKQQGVRFHFDCHIQQLVCEGKKIIGVQTDLGLLKADAYVVALGSYSTSLLKPLGIEIPVYPVKGYSLTLPIIDEKFAPQSTVMDETYKVALTRFSDRIRVAGTAELAGFDPAIPEARKATIEMVARDLFPHGGDFAKGQFWTGFRPMTPDGTPIIGATPYTNLYTNTGHGTLGWTMACGSASILADVLTHGESPLSRLGLDLFRYPKAS.

4–18 (VLVLGSGVVGLTSAW) provides a ligand contact to FAD.

Belongs to the DadA oxidoreductase family. The cofactor is FAD.

It catalyses the reaction a D-alpha-amino acid + A + H2O = a 2-oxocarboxylate + AH2 + NH4(+). Functionally, oxidative deamination of D-amino acids. The polypeptide is D-amino acid dehydrogenase (Vibrio cholerae serotype O1 (strain ATCC 39315 / El Tor Inaba N16961)).